Reading from the N-terminus, the 912-residue chain is Protein translocase subunit SecA (912 aa).

Residues Q87, 105–109 (GEGKT), and D508 contribute to the ATP site. A disordered region spans residues 855-912 (QHQDAGGYGADEEVEQMQGGNAPVPVSQVTRDEPKVGRNDPCPCGSGKKYKHCHGQLS). Positions 896, 898, 907, and 908 each coordinate Zn(2+). The segment covering 902-912 (KKYKHCHGQLS) has biased composition (basic residues).

Belongs to the SecA family. As to quaternary structure, monomer and homodimer. Part of the essential Sec protein translocation apparatus which comprises SecA, SecYEG and auxiliary proteins SecDF-YajC and YidC. The cofactor is Zn(2+).

Its subcellular location is the cell inner membrane. It localises to the cytoplasm. The enzyme catalyses ATP + H2O + cellular proteinSide 1 = ADP + phosphate + cellular proteinSide 2.. Part of the Sec protein translocase complex. Interacts with the SecYEG preprotein conducting channel. Has a central role in coupling the hydrolysis of ATP to the transfer of proteins into and across the cell membrane, serving both as a receptor for the preprotein-SecB complex and as an ATP-driven molecular motor driving the stepwise translocation of polypeptide chains across the membrane. In Xanthomonas campestris pv. campestris (strain 8004), this protein is Protein translocase subunit SecA.